A 406-amino-acid polypeptide reads, in one-letter code: Serine hydroxymethyltransferase (406 aa).

(6S)-5,6,7,8-tetrahydrofolate-binding positions include Leu111 and 115–117 (GHL). Lys220 carries the N6-(pyridoxal phosphate)lysine modification. 340–342 (SAF) contacts (6S)-5,6,7,8-tetrahydrofolate.

This sequence belongs to the SHMT family. Homodimer. Pyridoxal 5'-phosphate serves as cofactor.

Its subcellular location is the cytoplasm. It carries out the reaction (6R)-5,10-methylene-5,6,7,8-tetrahydrofolate + glycine + H2O = (6S)-5,6,7,8-tetrahydrofolate + L-serine. It participates in one-carbon metabolism; tetrahydrofolate interconversion. It functions in the pathway amino-acid biosynthesis; glycine biosynthesis; glycine from L-serine: step 1/1. Its function is as follows. Catalyzes the reversible interconversion of serine and glycine with tetrahydrofolate (THF) serving as the one-carbon carrier. This reaction serves as the major source of one-carbon groups required for the biosynthesis of purines, thymidylate, methionine, and other important biomolecules. Also exhibits THF-independent aldolase activity toward beta-hydroxyamino acids, producing glycine and aldehydes, via a retro-aldol mechanism. The chain is Serine hydroxymethyltransferase from Mycoplasma genitalium (strain ATCC 33530 / DSM 19775 / NCTC 10195 / G37) (Mycoplasmoides genitalium).